The sequence spans 319 residues: Aliphatic sulfonates import ATP-binding protein SsuB (319 aa).

An ABC transporter domain is found at 63-282 (VTLSGVSKRF…ARASAAFAAL (220 aa)). Position 95–102 (95–102 (GRSGCGKS)) interacts with ATP.

It belongs to the ABC transporter superfamily. Aliphatic sulfonates importer (TC 3.A.1.17.2) family. As to quaternary structure, the complex is composed of two ATP-binding proteins (SsuB), two transmembrane proteins (SsuC) and a solute-binding protein (SsuA).

It is found in the cell inner membrane. It carries out the reaction ATP + H2O + aliphatic sulfonate-[sulfonate-binding protein]Side 1 = ADP + phosphate + aliphatic sulfonateSide 2 + [sulfonate-binding protein]Side 1.. Its function is as follows. Part of the ABC transporter complex SsuABC involved in aliphatic sulfonates import. Responsible for energy coupling to the transport system. The sequence is that of Aliphatic sulfonates import ATP-binding protein SsuB from Burkholderia ambifaria (strain ATCC BAA-244 / DSM 16087 / CCUG 44356 / LMG 19182 / AMMD) (Burkholderia cepacia (strain AMMD)).